A 414-amino-acid chain; its full sequence is Putative ankyrin repeat protein BB_B28 (414 aa).

2 ANK repeats span residues 326 to 355 (NGNP…NINL) and 359 to 389 (NSQT…NPNI).

This chain is Putative ankyrin repeat protein BB_B28, found in Borreliella burgdorferi (strain ATCC 35210 / DSM 4680 / CIP 102532 / B31) (Borrelia burgdorferi).